The chain runs to 448 residues: tRNA modification GTPase MnmE (448 aa).

Positions 24, 81, and 120 each coordinate (6S)-5-formyl-5,6,7,8-tetrahydrofolate. In terms of domain architecture, TrmE-type G spans Gly216 to Gly373. K(+) is bound at residue Asn226. Residues Asn226–Ser231, Thr245–Thr251, and Asp270–Gly273 each bind GTP. Residue Ser230 participates in Mg(2+) binding. Residues Thr245, Ile247, and Thr250 each coordinate K(+). Thr251 contacts Mg(2+). Lys448 provides a ligand contact to (6S)-5-formyl-5,6,7,8-tetrahydrofolate.

It belongs to the TRAFAC class TrmE-Era-EngA-EngB-Septin-like GTPase superfamily. TrmE GTPase family. As to quaternary structure, homodimer. Heterotetramer of two MnmE and two MnmG subunits. The cofactor is K(+).

The protein resides in the cytoplasm. Its function is as follows. Exhibits a very high intrinsic GTPase hydrolysis rate. Involved in the addition of a carboxymethylaminomethyl (cmnm) group at the wobble position (U34) of certain tRNAs, forming tRNA-cmnm(5)s(2)U34. The polypeptide is tRNA modification GTPase MnmE (Neisseria gonorrhoeae (strain ATCC 700825 / FA 1090)).